A 461-amino-acid chain; its full sequence is Dihydrofolate reductase (461 aa).

Positions Asp-233–Lys-447 constitute a DHFR domain. NADP(+) is bound by residues Ala-239 and Gly-246–Ser-252. Glu-260–Ala-265 is a substrate binding site. Residue Arg-292 to Cys-294 coordinates NADP(+). Arg-308 serves as a coordination point for substrate. Residues Thr-314 to Asn-316 and Gly-365 to Ser-372 contribute to the NADP(+) site.

The protein belongs to the dihydrofolate reductase family.

It carries out the reaction (6S)-5,6,7,8-tetrahydrofolate + NADP(+) = 7,8-dihydrofolate + NADPH + H(+). It participates in cofactor biosynthesis; tetrahydrofolate biosynthesis; 5,6,7,8-tetrahydrofolate from 7,8-dihydrofolate: step 1/1. Its function is as follows. Key enzyme in folate metabolism. Catalyzes an essential reaction for de novo glycine and purine synthesis, and for DNA precursor synthesis. The sequence is that of Dihydrofolate reductase (dfr1) from Schizosaccharomyces pombe (strain 972 / ATCC 24843) (Fission yeast).